A 1494-amino-acid chain; its full sequence is Serine/threonine-protein kinase VPS15 (1494 aa).

The N-myristoyl glycine moiety is linked to residue Gly2. The Protein kinase domain maps to 27–307; it reads LVLKEVLGRG…VFPNYFSPFL (281 aa). ATP contacts are provided by residues 33 to 41 and Lys54; that span reads LGRGRFLKS. Residue Asp149 is the Proton acceptor of the active site. 7 HEAT repeats span residues 383–421, 480–517, 524–562, 610–646, 648–685, 687–724, and 727–764; these read NSKDEIFYSISDALKKNRHPFLKKITMDDLGTLMSLYDS, DRLQRVLPYVVALLSDPTAIVRCAAMETLCDILPLVRD, KIFPEYIFPMLSMLPEDTEESVRICYASNIAKLALTAYG, KTIAEVVQELVMGPKQTPNVRRALLQDIGELCFFFGQ, QSNDFLLPILPAFLNDRDEQLRSVFFEKIVYVCFFVGQ, SVEEYLLPYIDQALSDQTEAVIVNALECLSTLCKSSFL, and RALLQMIECVYPLLCYPSQWVRRAVVTFIAASSECLGA. Disordered regions lie at residues 859–903 and 1037–1064; these read QSVE…TVEL and SASVTSEDASSPADLVGEPSLSRTSVPD. A compositionally biased stretch (low complexity) spans 1037 to 1047; that stretch reads SASVTSEDASS. WD repeat units follow at residues 1079–1118, 1127–1166, 1184–1226, 1231–1270, 1276–1323, 1371–1409, and 1466–1494; these read EHRSAVNDIATSSDHSFFVSASDDSTVKVWDSRKLEKDIS, LEGSRGMCTTMLRNSTQVVVGASDGVIHMFSIDHISRGLG, KEGA…DAWT, PEEGYVSSLVTSPCGNWFVSGSSRGVLTLWDLRFRVPVNS, ICPI…CHQV, PRLPGIRSLLPLPGGDLLTGGTDLKIRRWDYSSPERSYC, and DSVQSLASVKLNQRLLISSSRDGAIKVWK.

It belongs to the protein kinase superfamily. Ser/Thr protein kinase family. As to quaternary structure, interacts with VPS34. Component of a complex made of VPS38/USL1 and PI3K main subunits such as VPS15, ATG6/VPS30 and VPS34. In terms of processing, autophosphorylated. Mainly expressed in anthers, pollen grains and pollen tubes, and, to a lower extent, in other tissues and organs including seedlings, roots, stems, leaves, flowers, pitils and siliques.

It localises to the cytoplasm. Its subcellular location is the golgi apparatus. It is found in the trans-Golgi network membrane. The protein localises to the endosome membrane. The enzyme catalyses L-seryl-[protein] + ATP = O-phospho-L-seryl-[protein] + ADP + H(+). It carries out the reaction L-threonyl-[protein] + ATP = O-phospho-L-threonyl-[protein] + ADP + H(+). Serine/threonine-protein kinase required for cytoplasm to vacuole transport (Cvt) and autophagy as a part of the autophagy-specific VPS34 PI3-kinase complex I. Required for pollen development and germination, probably via the modulation of phosphatidylinositol 3-phosphate (PI3P) formation and vacuolar organization. The protein is Serine/threonine-protein kinase VPS15 of Arabidopsis thaliana (Mouse-ear cress).